We begin with the raw amino-acid sequence, 404 residues long: Dihydrosphingosine 1-phosphate phosphatase YSR3 (404 aa).

Topologically, residues 1-86 (MTIIQTVTEL…PFRDVYFKYT (86 aa)) are lumenal. N-linked (GlcNAc...) asparagine glycosylation is present at Asn62. A helical transmembrane segment spans residues 87–107 (SLMGSHMFYVIVLPMPVWLGY). Topologically, residues 108–113 (RDLTRD) are cytoplasmic. Residues 114–134 (MIYVLGYSIYLSGYLKDYWCL) traverse the membrane as a helical segment. Residues 129–137 (KDYWCLPRP) are phosphatase sequence motif I. Residues 135–154 (PRPKSPPVDRITLSEYTTKE) lie on the Lumenal side of the membrane. A helical membrane pass occupies residues 155 to 176 (YGAPSSHSANATAVSLLFFWRI). A phosphatase sequence motif II region spans residues 158-161 (PSSH). His161 serves as the catalytic Proton donor. At 177-182 (CLSDTL) the chain is on the cytoplasmic side. Residues 183 to 203 (VWPTKLLLLSLVIFYYLTLVF) form a helical membrane-spanning segment. Residues 204–215 (GRVYCGMHGMLD) are Lumenal-facing. Residues 204 to 215 (GRVYCGMHGMLD) are phosphatase sequence motif III. His211 serves as the catalytic Nucleophile. The chain crosses the membrane as a helical span at residues 216-236 (LFSGAAVGAICFFIRIWVVHA). The Cytoplasmic segment spans residues 237–241 (LRNFQ). Residues 242–262 (IGEHLWFPLLSVAWGLFILFN) traverse the membrane as a helical segment. Residues 263-319 (HVRPIDECPCFEDSVAFIGVVSGLDCSDWLTERYGWNLVCSRYASCGSKVFLRPLVG) lie on the Lumenal side of the membrane. The chain crosses the membrane as a helical span at residues 320 to 340 (VASVIVWKDVISKTAVYTLLI). At 341-379 (KLLRFHDDRSEKVHFHNETSEEEECLLYSGVSKVEIVGR) the chain is on the cytoplasmic side. The chain crosses the membrane as a helical span at residues 380-400 (FLIYAGIPTTVFLLCPVFFTW). Residues 401 to 404 (TNLR) lie on the Lumenal side of the membrane.

The protein belongs to the type 2 lipid phosphate phosphatase family.

Its subcellular location is the endoplasmic reticulum membrane. It catalyses the reaction sphinganine 1-phosphate + H2O = sphinganine + phosphate. Functionally, dihydrosphingosine 1-phosphate phosphatase required for efficient ceramide synthesis from exogenous sphingoid bases. Involved in endocytosis and calcium-mediated signaling. The protein is Dihydrosphingosine 1-phosphate phosphatase YSR3 of Saccharomyces cerevisiae (strain ATCC 204508 / S288c) (Baker's yeast).